Reading from the N-terminus, the 141-residue chain is Cystatin (141 aa).

The signal sequence occupies residues 1–26 (MVRSQLPVAAPLRLLCALLLLPSATM). The Cystatin domain maps to 29-129 (GGLSPRSVTD…CHFQVWSRPW (101 aa)). Residues 73–77 (QVVSG) carry the Secondary area of contact motif. 2 disulfides stabilise this stretch: cysteine 91-cysteine 107 and cysteine 120-cysteine 140.

It belongs to the cystatin family. In terms of tissue distribution, expressed at a low level by the venom gland (at protein level).

The protein resides in the secreted. Its function is as follows. Inhibits various C1 cysteine proteases including cathepsin L, papain and cathepsin B. This protein has no toxic activity and its function in the venom is unknown. It may play a role as a housekeeping or regulatory protein. In Micropechis ikaheca (New Guinean small-eyed snake), this protein is Cystatin.